The primary structure comprises 221 residues: MRSQLSLIGKKEGMMHVFDKNGNLVACSVISIEPNVVAQLKTASSDGYNAVQMGADAVKAPEKTIEKRFSKALLGHFKKSGGCAFRVLKEVVVSEEAVQSVSLGDEFGVEIFDGVSNVDVCGISKGKGFQGVMKKFGFRGGPKSHGSGFHRHAGSIGMRSTPGRCFPGSKRPSHMGCDRVTVKNLEVVKVDLDRKVMLVKGAIPGFKGSVVVVKRSCGVEG.

This sequence belongs to the universal ribosomal protein uL3 family. As to quaternary structure, part of the 50S ribosomal subunit. Forms a cluster with proteins L14 and L19.

Its function is as follows. One of the primary rRNA binding proteins, it binds directly near the 3'-end of the 23S rRNA, where it nucleates assembly of the 50S subunit. This chain is Large ribosomal subunit protein uL3, found in Chlamydia muridarum (strain MoPn / Nigg).